Consider the following 339-residue polypeptide: Heat-inducible transcription repressor HrcA (339 aa).

The protein belongs to the HrcA family.

Negative regulator of class I heat shock genes (grpE-dnaK-dnaJ and groELS operons). Prevents heat-shock induction of these operons. The sequence is that of Heat-inducible transcription repressor HrcA from Clostridium perfringens (strain 13 / Type A).